A 274-amino-acid chain; its full sequence is Large ribosomal subunit protein uL2cz/uL2cy (274 aa).

Disordered regions lie at residues 1–23 (MAIH…SKVK) and 224–274 (NPVD…RRSK).

Belongs to the universal ribosomal protein uL2 family. As to quaternary structure, part of the 50S ribosomal subunit.

It localises to the plastid. The protein resides in the chloroplast. The polypeptide is Large ribosomal subunit protein uL2cz/uL2cy (rpl2-A) (Lactuca sativa (Garden lettuce)).